A 460-amino-acid polypeptide reads, in one-letter code: Chromosomal replication initiator protein DnaA (460 aa).

A domain I, interacts with DnaA modulators region spans residues 1–84 (MAVSLWQQCI…RFDIGSRPSA (84 aa)). The domain II stretch occupies residues 84–123 (AKKPEPAPVAAVRVPNPQTKASVGTSFNTTEPVVNANHRS). The tract at residues 124 to 340 (NINPTYQFDN…GALNRVIANA (217 aa)) is domain III, AAA+ region. Residues G168, G170, K171, and T172 each contribute to the ATP site. The tract at residues 341 to 460 (NFTGRPITID…YANLIRTLSS (120 aa)) is domain IV, binds dsDNA.

The protein belongs to the DnaA family. In terms of assembly, oligomerizes as a right-handed, spiral filament on DNA at oriC.

The protein localises to the cytoplasm. Functionally, plays an essential role in the initiation and regulation of chromosomal replication. ATP-DnaA binds to the origin of replication (oriC) to initiate formation of the DNA replication initiation complex once per cell cycle. Binds the DnaA box (a 9 base pair repeat at the origin) and separates the double-stranded (ds)DNA. Forms a right-handed helical filament on oriC DNA; dsDNA binds to the exterior of the filament while single-stranded (ss)DNA is stabiized in the filament's interior. The ATP-DnaA-oriC complex binds and stabilizes one strand of the AT-rich DNA unwinding element (DUE), permitting loading of DNA polymerase. After initiation quickly degrades to an ADP-DnaA complex that is not apt for DNA replication. Binds acidic phospholipids. The polypeptide is Chromosomal replication initiator protein DnaA (Shewanella sp. (strain MR-7)).